A 271-amino-acid polypeptide reads, in one-letter code: Bifunctional protein FolD (271 aa).

NADP(+) is bound by residues 154–156 (GRS), S181, and I222.

This sequence belongs to the tetrahydrofolate dehydrogenase/cyclohydrolase family. Homodimer.

The enzyme catalyses (6R)-5,10-methylene-5,6,7,8-tetrahydrofolate + NADP(+) = (6R)-5,10-methenyltetrahydrofolate + NADPH. It carries out the reaction (6R)-5,10-methenyltetrahydrofolate + H2O = (6R)-10-formyltetrahydrofolate + H(+). Its pathway is one-carbon metabolism; tetrahydrofolate interconversion. In terms of biological role, catalyzes the oxidation of 5,10-methylenetetrahydrofolate to 5,10-methenyltetrahydrofolate and then the hydrolysis of 5,10-methenyltetrahydrofolate to 10-formyltetrahydrofolate. This is Bifunctional protein FolD from Thermotoga maritima (strain ATCC 43589 / DSM 3109 / JCM 10099 / NBRC 100826 / MSB8).